The primary structure comprises 496 residues: L-carnitine dehydrogenase/betainyl-CoA thioesterase (496 aa).

The L-carnitine dehydrogenase stretch occupies residues 1–335 (MTTITKAACI…KRLWEKGGSP (335 aa)). An NAD(+)-binding site is contributed by 11–16 (GGGVIG). The segment at 336 to 496 (SKSLDASGPL…GAGRHVGQKR (161 aa)) is betainyl-CoA thioesterase.

This sequence in the N-terminal section; belongs to the 3-hydroxyacyl-CoA dehydrogenase family. L-carnitine dehydrogenase subfamily. It in the C-terminal section; belongs to the betainyl-CoA thioesterase family. In terms of assembly, homodimer.

The protein resides in the cytoplasm. The catalysed reaction is carnitine + NAD(+) = 3-dehydrocarnitine + NADH + H(+). It carries out the reaction N,N,N-trimethylglycyl-CoA + H2O = glycine betaine + CoA + H(+). Its pathway is amine and polyamine metabolism; carnitine metabolism. Its function is as follows. Multifunctional enzyme that catalyzes the NAD(+)-dependent oxidation of L-carnitine to 3-dehydrocarnitine and the cleavage of betainyl-CoA (N,N,N-trimethylglycyl-CoA) into glycine betaine and coenzyme A. Can also hydrolyze L-carnitinyl-CoA, but with much lower efficiency. Is involved in a L-carnitine degradation pathway that allows R.meliloti to grow on L-carnitine as the sole source of carbon and nitrogen. This chain is L-carnitine dehydrogenase/betainyl-CoA thioesterase, found in Rhizobium meliloti (strain 1021) (Ensifer meliloti).